A 259-amino-acid chain; its full sequence is Undecaprenyl-diphosphatase 4 (259 aa).

8 consecutive transmembrane segments (helical) span residues 1–21 (MNWLEAFILGIIQGLTEFLPI), 39–59 (AGLFLDTMLHIGTLLAVFIYY), 71–91 (FSKLMLLLIVGTIPAVVIGLL), 99–119 (ISKTGITIGWEFLVTGFFLYV), 133–153 (ITYKDAFIIGSFQAAAIFPAI), 173–193 (AAYFSFLLSTPAIVGAIILQF), 208–228 (SLIVGTLSAAFFGYIAVSWMI), and 239–259 (FAYYVWGLGILILTLQFTDVF).

This sequence belongs to the UppP family.

The protein resides in the cell membrane. The catalysed reaction is di-trans,octa-cis-undecaprenyl diphosphate + H2O = di-trans,octa-cis-undecaprenyl phosphate + phosphate + H(+). Its function is as follows. Catalyzes the dephosphorylation of undecaprenyl diphosphate (UPP). Confers resistance to bacitracin. In Bacillus thuringiensis subsp. konkukian (strain 97-27), this protein is Undecaprenyl-diphosphatase 4.